A 657-amino-acid polypeptide reads, in one-letter code: Protein kinase and PP2C-like domain-containing protein (657 aa).

Residues 32-327 (FSLLSPIAKG…LKIIEKHIAV (296 aa)) enclose the Protein kinase domain. Residues 38-46 (IAKGSESTV) and Lys59 contribute to the ATP site. Asp156 functions as the Proton acceptor; for kinase activity in the catalytic mechanism. The region spanning 390–647 (SWGSFATCGR…DNITVIVVFL (258 aa)) is the PPM-type phosphatase domain. The Mn(2+) site is built by Asp426, Gly427, Asp598, and Asp638.

It in the N-terminal section; belongs to the protein kinase superfamily. Ser/Thr protein kinase family. The protein in the C-terminal section; belongs to the PP2C family. Requires Mg(2+) as cofactor. Mn(2+) serves as cofactor.

The catalysed reaction is L-seryl-[protein] + ATP = O-phospho-L-seryl-[protein] + ADP + H(+). It carries out the reaction L-threonyl-[protein] + ATP = O-phospho-L-threonyl-[protein] + ADP + H(+). It catalyses the reaction O-phospho-L-seryl-[protein] + H2O = L-seryl-[protein] + phosphate. The enzyme catalyses O-phospho-L-threonyl-[protein] + H2O = L-threonyl-[protein] + phosphate. The sequence is that of Protein kinase and PP2C-like domain-containing protein from Oryza sativa subsp. japonica (Rice).